The sequence spans 1597 residues: Rho guanine nucleotide exchange factor 5 (1597 aa).

3 disordered regions span residues 138-246 (PFSS…EGTL), 258-455 (EEQM…SLEP), and 467-1072 (GSFL…VFRE). The residue at position 184 (Ser-184) is a Phosphoserine. Polar residues predominate over residues 192–204 (ETNQNEGSESGTI). A compositionally biased stretch (low complexity) spans 217 to 237 (ESQGLLHPQEVQVLEEQGQQE). Positions 266-278 (NDEKGEQKQKQEQ) are enriched in basic and acidic residues. Acidic residues predominate over residues 299 to 309 (GLNDGEWEQED). 2 stretches are compositionally biased toward basic and acidic residues: residues 323 to 368 (GEER…KEKG) and 394 to 404 (RSREEENEHHG). Over residues 428 to 438 (LMTQIPGTQTE) the composition is skewed to polar residues. Phosphoserine occurs at positions 445 and 450. Basic and acidic residues predominate over residues 474 to 490 (SPDKEIDQNSQQEESRL). Residues 512-522 (PRTPDSAPPSP) are compositionally biased toward pro residues. 2 stretches are compositionally biased toward polar residues: residues 583-601 (STGTSPPRPPANSTGTVQH) and 655-682 (DYSTVSASPTALSTLKQDSQESISNLER). Residues 731 to 746 (QRRDTHPSVVETDGHA) are compositionally biased toward basic and acidic residues. Pro residues-rich tracts occupy residues 812-828 (PLPPTPDLPQPHLPPIS) and 838-856 (PLPPLPIIDPPTEPPPLPP). The residue at position 866 (Arg-866) is an Asymmetric dimethylarginine. Positions 901–920 (ATARSTESFTSTSRSKSEVS) are enriched in low complexity. The segment covering 926–941 (SNMTNFLCPSSPTTPW) has biased composition (polar residues). The span at 950–969 (SKDEAGVSEHPEAPAREPLR) shows a compositional bias: basic and acidic residues. A phosphoserine mark is found at Ser-983, Ser-1011, and Ser-1044. A compositionally biased stretch (basic and acidic residues) spans 990-1012 (QPEKPSHLHLEKASSWPHRRDSG). Residues 1057–1072 (AVEKHPGPSDTVVFRE) are compositionally biased toward basic and acidic residues. Ser-1126 carries the phosphoserine modification. One can recognise a DH domain in the interval 1174–1358 (KLQEVKFELI…EQLIRDCNNN (185 aa)). The PH domain maps to 1390-1502 (WLVKSGELTA…WISALAMPRE (113 aa)). Residues 1510–1571 (YNSPQVQCLR…PVQQVEFISN (62 aa)) enclose the SH3 domain.

In terms of assembly, interacts with SRC. Forms a ternary complex with SRC and the PI3K 85 kDa subunit. Interacts with and is activated by the heterodimer formed by GNB1 and GNG2. Interacts with ODAM (via C-terminus). Interacts with RHOA. In terms of processing, activation of SRC induces tyrosine phosphorylation of ARHGEF5. In terms of tissue distribution, ubiquitously expressed with highest levels in placenta. High levels are also found in colon, kidney, trachea, prostate, liver, pancreas, pituitary gland, thyroid gland and mammary gland. In fetal tissues, expressed at high levels in kidney, lung and liver. Expressed at low levels in lung and heart.

The protein localises to the cytoplasm. The protein resides in the nucleus. Its subcellular location is the cell projection. It localises to the podosome. Guanine nucleotide exchange factor which activates Rho GTPases. Strongly activates RHOA. Also strongly activates RHOB, weakly activates RHOC and RHOG and shows no effect on RHOD, RHOV, RHOQ or RAC1. Involved in regulation of cell shape and actin cytoskeletal organization. Plays a role in actin organization by generating a loss of actin stress fibers and the formation of membrane ruffles and filopodia. Required for SRC-induced podosome formation. Involved in positive regulation of immature dendritic cell migration. The protein is Rho guanine nucleotide exchange factor 5 (ARHGEF5) of Homo sapiens (Human).